The primary structure comprises 761 residues: Zinc finger protein 287 (761 aa).

Residues 49–131 enclose the SCAN box domain; it reads RQNFRNFPYP…TLVEDLTQIL (83 aa). Positions 134 to 154 are disordered; it reads EAPQNSTLSQDTPEEDPRGKH. One can recognise a KRAB domain in the interval 170 to 238; the sequence is MTFKDVAVDI…IKEILEGPSP (69 aa). 14 consecutive C2H2-type zinc fingers follow at residues 368 to 390, 396 to 418, 424 to 446, 452 to 474, 480 to 502, 508 to 530, 536 to 558, 564 to 586, 592 to 614, 620 to 642, 648 to 670, 676 to 698, 704 to 726, and 732 to 754; these read YKCNVCGKKFRKYPSLLKHQSTH, YECEECGKEFRHISSLIAHQRMH, YECHQCGKAFSQRAHLTIHQRIH, YKCDDCGKDFSQRAHLTIHQRTH, YKCLECGKTFSHSSSLINHQRVH, YICNECGKTFSQSTHLLQHQKIH, YKCNECWKVFSQSTYLIRHQRIH, YKCNECGKAFAHSSTLIQHQTTH, YICNICGKAFSQSANLTQHHRTH, YKCSVCGKAFSQSVHLTQHQRIH, FKCNICGKAYRQGANLTQHQRIH, YKCNECGKAFIYSSSLNQHQRTH, YKCNECDKDFSQRTCLIQHQRIH, and YACRICGKTFTQSTNLIQHQRVH.

Belongs to the krueppel C2H2-type zinc-finger protein family.

Its subcellular location is the nucleus. Functionally, may be involved in transcriptional regulation. The polypeptide is Zinc finger protein 287 (Homo sapiens (Human)).